A 127-amino-acid polypeptide reads, in one-letter code: Aspartate 1-decarboxylase (127 aa).

Ser25 acts as the Schiff-base intermediate with substrate; via pyruvic acid in catalysis. Ser25 carries the post-translational modification Pyruvic acid (Ser). Residue Thr57 coordinates substrate. Tyr58 acts as the Proton donor in catalysis. 73-75 (GAA) serves as a coordination point for substrate.

The protein belongs to the PanD family. Heterooctamer of four alpha and four beta subunits. The cofactor is pyruvate. In terms of processing, is synthesized initially as an inactive proenzyme, which is activated by self-cleavage at a specific serine bond to produce a beta-subunit with a hydroxyl group at its C-terminus and an alpha-subunit with a pyruvoyl group at its N-terminus.

It localises to the cytoplasm. It catalyses the reaction L-aspartate + H(+) = beta-alanine + CO2. It participates in cofactor biosynthesis; (R)-pantothenate biosynthesis; beta-alanine from L-aspartate: step 1/1. In terms of biological role, catalyzes the pyruvoyl-dependent decarboxylation of aspartate to produce beta-alanine. This chain is Aspartate 1-decarboxylase, found in Desulfitobacterium hafniense (strain DSM 10664 / DCB-2).